We begin with the raw amino-acid sequence, 271 residues long: Mannosyl-3-phosphoglycerate phosphatase (271 aa).

Residue D13 is the Nucleophile of the active site. Positions 13, 15, and 214 each coordinate Mg(2+).

It belongs to the HAD-like hydrolase superfamily. MPGP family. Mg(2+) serves as cofactor.

Its subcellular location is the cytoplasm. The enzyme catalyses 2-O-(alpha-D-mannosyl)-3-phosphoglycerate + H2O = (2R)-2-O-(alpha-D-mannosyl)-glycerate + phosphate. The chain is Mannosyl-3-phosphoglycerate phosphatase from Escherichia coli O17:K52:H18 (strain UMN026 / ExPEC).